Here is a 476-residue protein sequence, read N- to C-terminus: Aspartyl/glutamyl-tRNA(Asn/Gln) amidotransferase subunit B (476 aa).

This sequence belongs to the GatB/GatE family. GatB subfamily. As to quaternary structure, heterotrimer of A, B and C subunits.

The enzyme catalyses L-glutamyl-tRNA(Gln) + L-glutamine + ATP + H2O = L-glutaminyl-tRNA(Gln) + L-glutamate + ADP + phosphate + H(+). The catalysed reaction is L-aspartyl-tRNA(Asn) + L-glutamine + ATP + H2O = L-asparaginyl-tRNA(Asn) + L-glutamate + ADP + phosphate + 2 H(+). Allows the formation of correctly charged Asn-tRNA(Asn) or Gln-tRNA(Gln) through the transamidation of misacylated Asp-tRNA(Asn) or Glu-tRNA(Gln) in organisms which lack either or both of asparaginyl-tRNA or glutaminyl-tRNA synthetases. The reaction takes place in the presence of glutamine and ATP through an activated phospho-Asp-tRNA(Asn) or phospho-Glu-tRNA(Gln). This is Aspartyl/glutamyl-tRNA(Asn/Gln) amidotransferase subunit B from Lactobacillus johnsonii (strain CNCM I-12250 / La1 / NCC 533).